The following is a 795-amino-acid chain: Outer membrane protein assembly factor BamA (795 aa).

An N-terminal signal peptide occupies residues 1 to 19 (MKKLLIASLLFGTTTTVFA). POTRA domains follow at residues 22-89 (FVAK…VVAK), 90-170 (SIIS…INED), 173-259 (AKLA…VNEG), 262-341 (YDLR…VDAG), and 344-418 (LTVR…VKER).

The protein belongs to the BamA family. In terms of assembly, part of the Bam complex.

Its subcellular location is the cell outer membrane. Part of the outer membrane protein assembly complex, which is involved in assembly and insertion of beta-barrel proteins into the outer membrane. The chain is Outer membrane protein assembly factor BamA from Haemophilus influenzae (strain ATCC 51907 / DSM 11121 / KW20 / Rd).